We begin with the raw amino-acid sequence, 132 residues long: Small ribosomal subunit protein uS19 (132 aa).

It belongs to the universal ribosomal protein uS19 family.

Its function is as follows. Protein S19 forms a complex with S13 that binds strongly to the 16S ribosomal RNA. This Pyrococcus abyssi (strain GE5 / Orsay) protein is Small ribosomal subunit protein uS19 (rps19).